Here is an 872-residue protein sequence, read N- to C-terminus: MKELSSAQIRQMWLDFWKSKGHCVEPSANLVPVNDPTLLWINSGVATLKKYFDGSVIPENPRITNAQKSIRTNDIENVGKTARHHTMFEMLGNFSIGDYFRDEAIEWGFELLTSPEWFDFPKDKLYMTYYPDDKDSYNRWIACGVEPSHLVPIEDNFWEIGAGPSGPDTEIFFDRGEDFDPENIGLRLLAEDIENDRYIEIWNIVLSQFNADPAVPRSEYKELPNKNIDTGAGLERLAAVMQGAKTNFETDLFMPIIREVEKLSGKTYDPDGDNMSFKVIADHIRALSFAIGDGALPGNEGRGYVLRRLLRRAVMHGRRLGINETFLYKLVLTVGQIMESYYPEVLEKRDFIEKIVKREEETFARTIDAGSGHLDSLLAQLKAEGKDTLEGKDIFKLYDTYGFPVELTEELAEDAGYKIDHEGFKSAMKEQQDRARAAVVKGGSMGMQNETLAGIVEESRFEYDTYSLESSLSVIIADNERTEAVSEGQALLVFAQTPFYAEMGGQVADTGRIKNDKGDTVAEVVDVQKAPNGQPLHTVNVLASLSVGTNYTLEINKERRLAVEKNHTATHLLHAALHNVIGEHATQAGSLNEEEFLRFDFTHFEAVSNEELRHIEQEVNEQIWNALTITTTETDVETAKEMGAMALFGEKYGKVVRVVQIGNYSVELCGGTHLNNSSEIGLFKIVKEEGIGSGTRRIIAVTGRQAFEAYRNQEDALKEIAATVKAPQLKDAAAKVQALSDSLRDFQKENAELKEKAAAAAAGDVFKDVQEAKGVRFIASQVDVADAGALRTFADNWKQKDYSDVLVLVAAIGEKVNVLVASKTKDVHAGNMIKELAPIVAGRGGGKPDMAMAGGSDASKIAELLAAVAETV.

Residues histidine 567, histidine 571, cysteine 669, and histidine 673 each coordinate Zn(2+).

It belongs to the class-II aminoacyl-tRNA synthetase family. Zn(2+) is required as a cofactor.

It is found in the cytoplasm. The enzyme catalyses tRNA(Ala) + L-alanine + ATP = L-alanyl-tRNA(Ala) + AMP + diphosphate. Its function is as follows. Catalyzes the attachment of alanine to tRNA(Ala) in a two-step reaction: alanine is first activated by ATP to form Ala-AMP and then transferred to the acceptor end of tRNA(Ala). Also edits incorrectly charged Ser-tRNA(Ala) and Gly-tRNA(Ala) via its editing domain. In Streptococcus pyogenes serotype M2 (strain MGAS10270), this protein is Alanine--tRNA ligase.